We begin with the raw amino-acid sequence, 72 residues long: Large ribosomal subunit protein uL29 (72 aa).

The protein belongs to the universal ribosomal protein uL29 family.

The protein is Large ribosomal subunit protein uL29 of Prochlorococcus marinus (strain MIT 9515).